We begin with the raw amino-acid sequence, 195 residues long: Calcineurin B homologous protein 1 (195 aa).

Glycine 2 is lipidated: N-myristoyl glycine. A Necessary for association with microtubule and interaction with GAPDH motif is present at residues 2–6 (GSRAS). EF-hand domains follow at residues 26–61 (SQITRLYSRFTSLDKGENGTLSREDFQRIPELAINP), 71–106 (FSEGEDQVNFRGFMRTLAHFRPIEDNEKSKDVNGPE), 110–145 (SRSNKLHFAFRLYDLDKDDKISRDELLQVLRMMVGV), and 151–186 (QLGSIADRTIQEADQDGDSAISFTEFVKVLEKVDVE). 5 residues coordinate Ca(2+): aspartate 123, aspartate 125, aspartate 127, lysine 129, and glutamate 134. Residues 138–147 (VLRMMVGVNI) carry the Nuclear export signal 1 motif. Residues aspartate 164, aspartate 166, aspartate 168, and glutamate 175 each contribute to the Ca(2+) site. A Nuclear export signal 2 motif is present at residues 176–185 (FVKVLEKVDV).

Belongs to the calcineurin regulatory subunit family. CHP subfamily. As to quaternary structure, monomer. Interacts with STK17B; the interaction occurs in a calcium-independent manner and induces the translocation of CHP1 from the Golgi to the nucleus. Interacts with GAPDH; the interaction is direct, occurs in a N-myristoylation-dependent manner and facilitates the ability of CHP1 to bind microtubules. Interacts with KIF1B (via the C-terminal end of the kinesin-motor domain); the interaction occurs in a calcium-dependent manner. Associates (via C-terminal domain) with microtubules; the association occurs with polymerized microtubules during the cell cycle in a myristoylation- and calcium-independent manner and is enhanced by GAPDH. Interacts with PPP3CA. Interacts with SLC9A1/NHE1 (via the cytoplasmic C-terminal domain); the interaction occurs at the plasma membrane in a calcium-dependent manner and at a domain that is critical for growth factor stimulation of the exchanger. Interacts with SLC9A3; increases SLC9A3 trafficking and activity at the plasma membrane. Post-translationally, phosphorylated; decreased phosphorylation is associated with an increase in SLC9A1/NHE1 Na(+)/H(+) exchange activity. Phosphorylation occurs in serum-dependent manner. The phosphorylation state may regulate the binding to SLC9A1/NHE1. In terms of processing, both N-myristoylation and calcium-mediated conformational changes are essential for its function in exocytic traffic. N-myristoylation is required for its association with microtubules and interaction with GAPDH, but not for the constitutive association to membranes.

Its subcellular location is the nucleus. It is found in the cytoplasm. It localises to the cytoskeleton. The protein localises to the endomembrane system. The protein resides in the endoplasmic reticulum-Golgi intermediate compartment. Its subcellular location is the endoplasmic reticulum. It is found in the cell membrane. It localises to the membrane. Functionally, calcium-binding protein involved in different processes such as regulation of vesicular trafficking, plasma membrane Na(+)/H(+) exchanger and gene transcription. Involved in the constitutive exocytic membrane traffic. Mediates the association between microtubules and membrane-bound organelles of the endoplasmic reticulum and Golgi apparatus and is also required for the targeting and fusion of transcytotic vesicles (TCV) with the plasma membrane. Functions as an integral cofactor in cell pH regulation by controlling plasma membrane-type Na(+)/H(+) exchange activity. Affects the pH sensitivity of SLC9A1/NHE1 by increasing its sensitivity at acidic pH. Required for the stabilization and localization of SLC9A1/NHE1 at the plasma membranes. Inhibits serum- and GTPase-stimulated Na(+)/H(+) exchange. Plays a role as an inhibitor of ribosomal RNA transcription by repressing the nucleolar UBF1 transcriptional activity. May sequester UBF1 in the nucleoplasm and limit its translocation to the nucleolus. Associates to the ribosomal gene promoter. Acts as a negative regulator of the calcineurin/NFAT signaling pathway. Inhibits NFAT nuclear translocation and transcriptional activity by suppressing the calcium-dependent calcineurin phosphatase activity. Also negatively regulates the kinase activity of the apoptosis-induced kinase STK17B. Inhibits both STK17B auto- and substrate-phosphorylations in a calcium-dependent manner. This is Calcineurin B homologous protein 1 (Chp1) from Mus musculus (Mouse).